Consider the following 596-residue polypeptide: Nuclear receptor subfamily 2 group C member 2 (596 aa).

The residue at position 19 (S19) is a Phosphoserine; by MAPK. S46 is subject to Phosphoserine. 2 positions are modified to phosphoserine; by MAPK: S55 and S68. S98 is modified (phosphoserine). Residues 114–189 (VEYCVVCGDK…MGMKMESVQS (76 aa)) constitute a DNA-binding region (nuclear receptor). 2 NR C4-type zinc fingers span residues 117-137 (CVVC…CEGC) and 153-177 (CRSS…LKKC). K192 is covalently cross-linked (Glycyl lysine isopeptide (Lys-Gly) (interchain with G-Cter in SUMO2)). Position 219 is a phosphoserine (S219). K231 carries the post-translational modification N6-acetyllysine. In terms of domain architecture, NR LBD spans 341–583 (GSIHVISRDQ…SIIPYILKME (243 aa)).

This sequence belongs to the nuclear hormone receptor family. NR2 subfamily. As to quaternary structure, homodimer; can bind DNA as homodimer. Heterodimer; binds DNA as a heterodimer with NR2C1 required for chromatin remodeling and for binding to promoter regions such as globin DR1 repeats. Interacts with NR2C2AP; the interaction represses selective NR2C2-mediated transcriptional activity. Interacts with PCAF; the interaction preferentially occurs on the non-phosphorylated form and induces NR2C2-mediated transactivation activity and does not require the ligand-binding domain. Interacts (MAPK-mediated phosphorylated form) with NRIP1; the interaction promotes repression of NR2C2-mediated activity. Interacts with NLRP10. Interacts (via ligand-binding region) with transcriptional corepressor JAZF1; the interaction promotes NR2C2-mediated transcriptional repression. Phosphorylation on Ser-19 and Ser-68 is an important regulator of NR2C2-mediated transcriptional activity. Phosphorylation on these residues recruits the corepressor, NRIP1, leading to transcripional repression, whereas the non-phosphorylated form preferentially recruits the coactivator, PCAF. In terms of tissue distribution, expressed in hepatocytes. Also expressed in granule cells of the hippocampus and the cerebellum.

It localises to the nucleus. Functionally, orphan nuclear receptor that can act as a repressor or activator of transcription. An important repressor of nuclear receptor signaling pathways such as retinoic acid receptor, retinoid X, vitamin D3 receptor, thyroid hormone receptor and estrogen receptor pathways. May regulate gene expression during the late phase of spermatogenesis. Activates transcriptional activity of LHCG and is antagonist of PPARA-mediated transactivation. Together with NR2C1, forms the core of the DRED (direct repeat erythroid-definitive) complex that represses embryonic and fetal globin transcription including that of GATA1. Binds to hormone response elements (HREs) consisting of two 5'-AGGTCA-3' half site direct repeat consensus sequences. Plays a fundamental role in early embryonic development and embryonic stem cells. Required for normal spermatogenesis and cerebellum development. Appears to be important for neurodevelopmentally regulated behavior. This Rattus norvegicus (Rat) protein is Nuclear receptor subfamily 2 group C member 2 (Nr2c2).